The chain runs to 585 residues: Frizzled-10 (585 aa).

The signal sequence occupies residues 1-24; that stretch reads MGPAAGNLVRAVLALCWLAEHCAG. The Extracellular portion of the chain corresponds to 25 to 229; that stretch reads ISSIDIERPG…DVYWSKDDKQ (205 aa). One can recognise an FZ domain in the interval 33–154; that stretch reads PGDGRCQPIE…NDPNYLCMEA (122 aa). Intrachain disulfides connect cysteine 38-cysteine 99, cysteine 46-cysteine 92, cysteine 83-cysteine 121, cysteine 110-cysteine 151, and cysteine 114-cysteine 138. N-linked (GlcNAc...) asparagine glycosylation is present at asparagine 52. A disordered region spans residues 155 to 195; that stretch reads PNNGSDEPPRGSSMLPPMFRPQRPSTGHDLQQHKDSLSRTS. N-linked (GlcNAc...) asparagine glycosylation occurs at asparagine 157. A helical membrane pass occupies residues 230-250; the sequence is FAVIWIAIWSILCFFSSAFTV. Over 251–265 the chain is Cytoplasmic; it reads LTFLIDPQRFKYPER. Residues 266 to 286 form a helical membrane-spanning segment; the sequence is PIIFLSMCYCVYSVGYIIRLF. Residues 287 to 314 are Extracellular-facing; it reads SGAESIACDRDSGQLYVIQEGLESTGCT. The chain crosses the membrane as a helical span at residues 315-335; sequence IVFLVLYYFGMASSLWWVILT. At 336–355 the chain is on the cytoplasmic side; the sequence is LTWFLAAGKKWGHEAIEANS. The chain crosses the membrane as a helical span at residues 356–376; the sequence is SYFHLAAWAIPAVKTIMILVM. The Extracellular segment spans residues 377–397; that stretch reads RRVAGDELTGLCYVGSMDVNA. Residues 398–418 traverse the membrane as a helical segment; that stretch reads LTGFVLIPLACYLIIGTSFIL. Over 419-447 the chain is Cytoplasmic; sequence SGFVALFHIRRVMKTGGENTDKLEKLMVR. A helical transmembrane segment spans residues 448–468; the sequence is IGVFSVLYTVPATCVIACYFY. Topologically, residues 469 to 506 are extracellular; sequence ERLNMDYWKIVASQQKCKMNNQTKNLDCMMNNSIPAVE. Residues asparagine 489 and asparagine 499 are each glycosylated (N-linked (GlcNAc...) asparagine). The helical transmembrane segment at 507–527 threads the bilayer; the sequence is IFMVKIFMLLVVGITSGMWIW. Over 528 to 585 the chain is Cytoplasmic; it reads TSKTLQSWQNVCSRRLKKRSRRKPASVITSSGIYKKPQHPQKTHLAKYESTLQPPTCV. The short motif at 530–535 is the Lys-Thr-X-X-X-Trp motif, mediates interaction with the PDZ domain of Dvl family members element; it reads KTLQSW. A PDZ-binding motif is present at residues 583–585; the sequence is TCV.

Belongs to the G-protein coupled receptor Fz/Smo family. Interacts with WNT7A. Expressed in the dorsal ectoderm overlying the developing spinal cord.

It is found in the cell membrane. Receptor for Wnt proteins. Functions in the canonical Wnt/beta-catenin signaling pathway. Activation by WNT7A induces expression of beta-catenin target genes. The canonical Wnt/beta-catenin signaling pathway leads to the activation of disheveled proteins, inhibition of GSK-3 kinase, nuclear accumulation of beta-catenin and activation of Wnt target genes. A second signaling pathway involving PKC and calcium fluxes has been seen for some family members, but it is not yet clear if it represents a distinct pathway or if it can be integrated in the canonical pathway, as PKC seems to be required for Wnt-mediated inactivation of GSK-3 kinase. Both pathways seem to involve interactions with G-proteins. May be involved in transduction and intercellular transmission of polarity information during tissue morphogenesis and/or in differentiated tissues. The sequence is that of Frizzled-10 (FZD10) from Gallus gallus (Chicken).